The sequence spans 179 residues: Large ribosomal subunit protein uL5 (179 aa).

The protein belongs to the universal ribosomal protein uL5 family. Part of the 50S ribosomal subunit; part of the 5S rRNA/L5/L18/L25 subcomplex. Contacts the 5S rRNA and the P site tRNA. Forms a bridge to the 30S subunit in the 70S ribosome.

Functionally, this is one of the proteins that bind and probably mediate the attachment of the 5S RNA into the large ribosomal subunit, where it forms part of the central protuberance. In the 70S ribosome it contacts protein S13 of the 30S subunit (bridge B1b), connecting the 2 subunits; this bridge is implicated in subunit movement. Contacts the P site tRNA; the 5S rRNA and some of its associated proteins might help stabilize positioning of ribosome-bound tRNAs. The polypeptide is Large ribosomal subunit protein uL5 (Caldanaerobacter subterraneus subsp. tengcongensis (strain DSM 15242 / JCM 11007 / NBRC 100824 / MB4) (Thermoanaerobacter tengcongensis)).